A 215-amino-acid chain; its full sequence is Ribonuclease T (215 aa).

The Exonuclease domain occupies 20-194; sequence VVIDVETAGF…YDTLQTAKLF (175 aa). Aspartate 23, glutamate 25, histidine 181, and aspartate 186 together coordinate Mg(2+). The active-site Proton donor/acceptor is histidine 181.

The protein belongs to the RNase T family. Homodimer. Mg(2+) serves as cofactor.

Functionally, trims short 3' overhangs of a variety of RNA species, leaving a one or two nucleotide 3' overhang. Responsible for the end-turnover of tRNA: specifically removes the terminal AMP residue from uncharged tRNA (tRNA-C-C-A). Also appears to be involved in tRNA biosynthesis. This is Ribonuclease T from Yersinia pestis.